Reading from the N-terminus, the 194-residue chain is Protein GrpE (194 aa).

The interval 1–44 (MAEEKQNEELNEQEELNETEAETAEAEQTAAEADAPAEETQTEM) is disordered. The segment covering 9 to 25 (ELNEQEELNETEAETAE) has biased composition (acidic residues).

It belongs to the GrpE family. As to quaternary structure, homodimer.

The protein localises to the cytoplasm. Functionally, participates actively in the response to hyperosmotic and heat shock by preventing the aggregation of stress-denatured proteins, in association with DnaK and GrpE. It is the nucleotide exchange factor for DnaK and may function as a thermosensor. Unfolded proteins bind initially to DnaJ; upon interaction with the DnaJ-bound protein, DnaK hydrolyzes its bound ATP, resulting in the formation of a stable complex. GrpE releases ADP from DnaK; ATP binding to DnaK triggers the release of the substrate protein, thus completing the reaction cycle. Several rounds of ATP-dependent interactions between DnaJ, DnaK and GrpE are required for fully efficient folding. This Bacillus licheniformis (strain ATCC 14580 / DSM 13 / JCM 2505 / CCUG 7422 / NBRC 12200 / NCIMB 9375 / NCTC 10341 / NRRL NRS-1264 / Gibson 46) protein is Protein GrpE.